A 248-amino-acid chain; its full sequence is Phosphoglycerate mutase (248 aa).

Substrate-binding positions include Arg-8–Asn-15, Thr-21–Gly-22, Arg-60, Glu-87–Tyr-90, Lys-98, Arg-114–Arg-115, and Gly-183–Asn-184. The Tele-phosphohistidine intermediate role is filled by His-9. Residue Glu-87 is the Proton donor/acceptor of the active site.

Belongs to the phosphoglycerate mutase family. BPG-dependent PGAM subfamily.

It localises to the cytoplasm. The enzyme catalyses (2R)-2-phosphoglycerate = (2R)-3-phosphoglycerate. The protein operates within carbohydrate degradation; glycolysis; pyruvate from D-glyceraldehyde 3-phosphate: step 3/5. This chain is Phosphoglycerate mutase (GPM1), found in Candida albicans (strain SC5314 / ATCC MYA-2876) (Yeast).